The following is a 375-amino-acid chain: Muconate cycloisomerase 1 (375 aa).

Residue K171 is the Proton acceptor of the active site. Mn(2+)-binding residues include D200, E226, and D251. E329 acts as the Proton donor in catalysis.

This sequence belongs to the mandelate racemase/muconate lactonizing enzyme family. Homooctamer. Mn(2+) is required as a cofactor.

The enzyme catalyses (S)-muconolactone = cis,cis-muconate + H(+). It participates in aromatic compound metabolism; beta-ketoadipate pathway; 5-oxo-4,5-dihydro-2-furylacetate from catechol: step 2/3. In terms of biological role, catalyzes a syn cycloisomerization. The protein is Muconate cycloisomerase 1 (catB) of Pseudomonas putida (Arthrobacter siderocapsulatus).